The following is a 480-amino-acid chain: Argininosuccinate lyase (480 aa).

Residues 1 to 17 are compositionally biased toward polar residues; it reads MTDTTPSADLGASSQQP. The segment at 1-24 is disordered; the sequence is MTDTTPSADLGASSQQPAKAWSGR.

This sequence belongs to the lyase 1 family. Argininosuccinate lyase subfamily.

It is found in the cytoplasm. It carries out the reaction 2-(N(omega)-L-arginino)succinate = fumarate + L-arginine. Its pathway is amino-acid biosynthesis; L-arginine biosynthesis; L-arginine from L-ornithine and carbamoyl phosphate: step 3/3. The sequence is that of Argininosuccinate lyase from Azoarcus sp. (strain BH72).